The primary structure comprises 294 residues: MNILIPATSANLGPGFDALGLSLKLFNSVKIEPSKFSSVSINGEGSDSTNLKRNNIFLSIFNEIFLELTGKNENFRIVFENNIPFSRGLGSSSAVIVGAIASAYEMAGFKASKSVVLNKAIIYETHPDNISPAVHGGFISAVVKNGNVYANKINLSDDIKAVVVIPNKPMSTASSRQILPKNYTMKECVNNLSHAAFLTSCFYEKRYDLLRVASEDMMHEERRMSALKELFEVRKVAYENGALMSTLSGSGSSFLNIAYKDDAKNLQDALKSKFGDFRVEIFSFDNDGYEITQS.

An ATP-binding site is contributed by 84 to 94 (PFSRGLGSSSA).

It belongs to the GHMP kinase family. Homoserine kinase subfamily.

It is found in the cytoplasm. It catalyses the reaction L-homoserine + ATP = O-phospho-L-homoserine + ADP + H(+). Its pathway is amino-acid biosynthesis; L-threonine biosynthesis; L-threonine from L-aspartate: step 4/5. Its function is as follows. Catalyzes the ATP-dependent phosphorylation of L-homoserine to L-homoserine phosphate. The chain is Homoserine kinase from Campylobacter concisus (strain 13826).